The sequence spans 505 residues: Peroxisome proliferator-activated receptor gamma (505 aa).

O-linked (GlcNAc) threonine glycosylation is present at Thr-84. A Phosphoserine modification is found at Ser-112. A DNA-binding region (nuclear receptor) is located at residues 136 to 210; it reads AIECRVCGDK…VGMSHNAIRF (75 aa). 2 consecutive NR C4-type zinc fingers follow at residues 139-159 and 176-198; these read CRVC…CEGC and CDLN…FQKC. The segment at 205–280 is interaction with FAM120B; that stretch reads HNAIRFGRMP…DKSPFVIYDM (76 aa). The NR LBD domain maps to 238-503; that stretch reads DLRALAKHLY…HPLLQEIYKD (266 aa). Lys-252 is covalently cross-linked (Glycyl lysine isopeptide (Lys-Gly) (interchain with G-Cter in ubiquitin)). Residues 314–317, His-351, His-477, and Tyr-501 each bind rosiglitazone; that span reads QFRS. Positions 495–503 match the 9aaTAD motif; it reads PLLQEIYKD.

The protein belongs to the nuclear hormone receptor family. NR1 subfamily. Interacts with FOXO1 (acetylated form). Heterodimer with other nuclear receptors, such as RXRA. The heterodimer with the retinoic acid receptor RXRA is called adipocyte-specific transcription factor ARF6. Interacts with NCOA6 coactivator, leading to a strong increase in transcription of target genes. Interacts with coactivator PPARBP, leading to a mild increase in transcription of target genes. Interacts with NOCA7 in a ligand-inducible manner. Interacts with NCOA1 and NCOA2 LXXLL motifs. Interacts with ASXL1, ASXL2, DNTTIP2, FAM120B, MAP2K1/MEK1, NR0B2, PDPK1, PRDM16, PRMT2 and TGFB1I1. Interacts (when activated by agonist) with PPP5C. Interacts with HELZ2 and THRAP3; the interaction stimulates the transcriptional activity of PPARG. Interacts with PER2, the interaction is ligand dependent and blocks PPARG recruitment to target promoters. Interacts with NOCT. Interacts with ACTN4. Interacts (when in the liganded conformation) with GPS2. Interacts with CRY1 and CRY2 in a ligand-dependent manner. In the absence of hormonal ligand, interacts with TACC1. In macrophages, interacts with PAQR3 and STUB1; the interactions promote PPARG poylubiquitination and STUB1-mediated degradation. O-GlcNAcylation at Thr-84 reduces transcriptional activity in adipocytes. Post-translationally, phosphorylated in basal conditions and dephosphorylated when treated with the ligand. May be dephosphorylated by PPP5C. The phosphorylated form may be inactive and dephosphorylation at Ser-112 induces adipogenic activity. In terms of processing, ubiquitinated by E3 ubiquitin-protein ligase complex containing FBXO9; leading to proteasomal degradation. Ubiquitinated at Lys-252 by TRIM55 leading to proteasomal degradation. Ubiquitinated by E3 ubiquitin-protein ligase STUB1/CHIP; leading to proteasomal degradation. As to expression, highest expression in adipose tissue. Lower in skeletal muscle, spleen, heart and liver. Also detectable in placenta, lung and ovary.

It is found in the nucleus. The protein localises to the cytoplasm. Its activity is regulated as follows. PDPK1 activates its transcriptional activity independently of its kinase activity. In terms of biological role, nuclear receptor that binds peroxisome proliferators such as hypolipidemic drugs and fatty acids. Once activated by a ligand, the nuclear receptor binds to DNA specific PPAR response elements (PPRE) and modulates the transcription of its target genes, such as acyl-CoA oxidase. It therefore controls the peroxisomal beta-oxidation pathway of fatty acids. Key regulator of adipocyte differentiation and glucose homeostasis. ARF6 acts as a key regulator of the tissue-specific adipocyte P2 (aP2) enhancer. Acts as a critical regulator of gut homeostasis by suppressing NF-kappa-B-mediated pro-inflammatory responses. Plays a role in the regulation of cardiovascular circadian rhythms by regulating the transcription of BMAL1 in the blood vessels. (Microbial infection) Upon treatment with M.tuberculosis or its lipoprotein LpqH, phosphorylation of MAPK p38 and IL-6 production are modulated, probably via this protein. The polypeptide is Peroxisome proliferator-activated receptor gamma (PPARG) (Homo sapiens (Human)).